A 100-amino-acid polypeptide reads, in one-letter code: ESAT-6-like protein EsxB (100 aa).

The tract at residues Gly80–Ile100 is disordered.

Belongs to the WXG100 family. CFP-10 subfamily. Forms a tight 1:1 complex with EsxA. An artificial EsxA-EsxB heterodimer interacts with EspA.

It is found in the secreted. Functionally, an exported protein. Plays a role in DNA conjugation, in at least a donor strain. In Mycolicibacterium smegmatis (strain ATCC 700084 / mc(2)155) (Mycobacterium smegmatis), this protein is ESAT-6-like protein EsxB.